We begin with the raw amino-acid sequence, 545 residues long: CTP synthase (545 aa).

The tract at residues 1 to 266 (MTTNYIFVTG…DDYICKRFSL (266 aa)) is amidoligase domain. Serine 14 is a binding site for CTP. Residue serine 14 coordinates UTP. Residues 15–20 (SLGKGI) and aspartate 72 contribute to the ATP site. Mg(2+) is bound by residues aspartate 72 and glutamate 140. CTP contacts are provided by residues 147–149 (DIE), 187–192 (KTKPTQ), and lysine 223. UTP contacts are provided by residues 187–192 (KTKPTQ) and lysine 223. Position 239 to 241 (239 to 241 (KDV)) interacts with ATP. The region spanning 291–542 (TIGMVGKYIE…VKAASEYQKR (252 aa)) is the Glutamine amidotransferase type-1 domain. Glycine 352 contributes to the L-glutamine binding site. The Nucleophile; for glutamine hydrolysis role is filled by cysteine 379. Residues 380–383 (LGMQ), glutamate 403, and arginine 470 contribute to the L-glutamine site. Catalysis depends on residues histidine 515 and glutamate 517.

Belongs to the CTP synthase family. In terms of assembly, homotetramer.

It catalyses the reaction UTP + L-glutamine + ATP + H2O = CTP + L-glutamate + ADP + phosphate + 2 H(+). It carries out the reaction L-glutamine + H2O = L-glutamate + NH4(+). The catalysed reaction is UTP + NH4(+) + ATP = CTP + ADP + phosphate + 2 H(+). It functions in the pathway pyrimidine metabolism; CTP biosynthesis via de novo pathway; CTP from UDP: step 2/2. Its activity is regulated as follows. Allosterically activated by GTP, when glutamine is the substrate; GTP has no effect on the reaction when ammonia is the substrate. The allosteric effector GTP functions by stabilizing the protein conformation that binds the tetrahedral intermediate(s) formed during glutamine hydrolysis. Inhibited by the product CTP, via allosteric rather than competitive inhibition. Catalyzes the ATP-dependent amination of UTP to CTP with either L-glutamine or ammonia as the source of nitrogen. Regulates intracellular CTP levels through interactions with the four ribonucleotide triphosphates. The chain is CTP synthase from Klebsiella pneumoniae subsp. pneumoniae (strain ATCC 700721 / MGH 78578).